Reading from the N-terminus, the 92-residue chain is Defensin Lucifensin (92 aa).

An N-terminal signal peptide occupies residues 1-23 (MKFFMVFAVTFCLALSFVSQSLA). The propeptide occupies 24-52 (LPADDEAHFVDGLEALKTIEPELHGRYKR). Disulfide bonds link C55–C82, C68–C88, and C72–C90.

The protein belongs to the invertebrate defensin family. Type 1 subfamily. In terms of processing, the disulfide bonds are essential for antimicrobial activity. Larval fat body, hemolymph and salivary glands (at protein level). Expressed in the salivary glands of all larval stages.

The protein resides in the secreted. Its subcellular location is the host cell membrane. Functionally, shows strong antibacterial activity against numerous Gram-positive bacteria. It selectively inhibits peptidoglycan biosynthesis through complex formation with the cell wall precursor lipid II (1:1 molar ratio) thus inhibiting cell wall synthesis. Shows antibacterial activity against the Gram-positive bacteria M.luteus, E.fecalis (MIC=32 mg/L), S.aureus (MIC=16 mg/L), S.carnosus (MIC=2 mg/L), S.pneumoniae (MIC=2 mg/L) and S.pyogenes (MIC=2 mg/L) and against a number of methicillin-resistant S.aureus and glycopeptide-intermediate S.aureus isolates. Does not show antibacterial activity against Gram-negative bacteria or antifungal activity against C.utilis. Shows slight antifungal activity against C.albicans. This Lucilia sericata (Green bottle fly) protein is Defensin Lucifensin.